Reading from the N-terminus, the 239-residue chain is UDP-2,3-diacylglucosamine hydrolase (239 aa).

5 residues coordinate Mn(2+): aspartate 8, histidine 10, aspartate 41, asparagine 79, and histidine 114. Substrate is bound at residue 79–80 (NR). Aspartate 122, serine 160, asparagine 164, lysine 167, and histidine 195 together coordinate substrate. Histidine 195 and histidine 197 together coordinate Mn(2+).

This sequence belongs to the LpxH family. It depends on Mn(2+) as a cofactor.

The protein localises to the cell inner membrane. The enzyme catalyses UDP-2-N,3-O-bis[(3R)-3-hydroxytetradecanoyl]-alpha-D-glucosamine + H2O = 2-N,3-O-bis[(3R)-3-hydroxytetradecanoyl]-alpha-D-glucosaminyl 1-phosphate + UMP + 2 H(+). It functions in the pathway glycolipid biosynthesis; lipid IV(A) biosynthesis; lipid IV(A) from (3R)-3-hydroxytetradecanoyl-[acyl-carrier-protein] and UDP-N-acetyl-alpha-D-glucosamine: step 4/6. Functionally, hydrolyzes the pyrophosphate bond of UDP-2,3-diacylglucosamine to yield 2,3-diacylglucosamine 1-phosphate (lipid X) and UMP by catalyzing the attack of water at the alpha-P atom. Involved in the biosynthesis of lipid A, a phosphorylated glycolipid that anchors the lipopolysaccharide to the outer membrane of the cell. The protein is UDP-2,3-diacylglucosamine hydrolase of Sodalis glossinidius (strain morsitans).